The primary structure comprises 1181 residues: Putative primase (1181 aa).

Residues 1141 to 1181 (RSHSTMVEHDMDDDESTNKKQELEEEDEECIDIDEYNNERF) are disordered. Acidic residues predominate over residues 1163–1181 (LEEEDEECIDIDEYNNERF).

The protein belongs to the eukaryotic-type primase small subunit family.

Functionally, synthesizes small RNA primers for the Okazaki fragments on both template strands at replication forks during viral DNA synthesis. This Magallana gigas (Pacific oyster) protein is Putative primase.